Here is a 140-residue protein sequence, read N- to C-terminus: Peptidyl-prolyl cis-trans isomerase FKBP2 (140 aa).

The N-terminal stretch at 1–20 is a signal peptide; sequence MRLSWVLTVLSICLSALVTA. The 89-residue stretch at 47–135 folds into the PPIase FKBP-type domain; it reads GDVLHMHYTG…VFEVELLKIE (89 aa).

This sequence belongs to the FKBP-type PPIase family. FKBP2 subfamily. In terms of assembly, interacts with ARFGEF1/BIG1 and the C-terminal of EPB41L2.

It is found in the endoplasmic reticulum membrane. It carries out the reaction [protein]-peptidylproline (omega=180) = [protein]-peptidylproline (omega=0). Its activity is regulated as follows. Inhibited by both FK506 and rapamycin. PPIases accelerate the folding of proteins. It catalyzes the cis-trans isomerization of proline imidic peptide bonds in oligopeptides. This chain is Peptidyl-prolyl cis-trans isomerase FKBP2 (FKBP2), found in Bos taurus (Bovine).